We begin with the raw amino-acid sequence, 522 residues long: Glucose-1-phosphate adenylyltransferase large subunit, chloroplastic/amyloplastic (522 aa).

A chloroplast-targeting transit peptide spans 1-62; the sequence is MSSMQFSSVL…RGPAATGAQC (62 aa). Positions 28 to 42 are enriched in basic and acidic residues; that stretch reads SERLKVGDSSSIRHE. The disordered stretch occupies residues 28-54; sequence SERLKVGDSSSIRHERASRRMCNGGRG.

This sequence belongs to the bacterial/plant glucose-1-phosphate adenylyltransferase family. Heterotetramer. As to expression, abundantly expressed in the whole grains, a slightly less abundant expression is seen in leaves, while a low level expression is seen in the roots. A greater expression is seen in the endosperm than in the embryo and pericarp layers.

It is found in the plastid. The protein localises to the chloroplast. Its subcellular location is the amyloplast. The catalysed reaction is alpha-D-glucose 1-phosphate + ATP + H(+) = ADP-alpha-D-glucose + diphosphate. The protein operates within glycan biosynthesis; starch biosynthesis. Its activity is regulated as follows. Insensitive to 3'phosphoglycerate and orthophosphate. In terms of biological role, this protein plays a role in synthesis of starch. It catalyzes the synthesis of the activated glycosyl donor, ADP-glucose from Glc-1-P and ATP. The polypeptide is Glucose-1-phosphate adenylyltransferase large subunit, chloroplastic/amyloplastic (AGP-L) (Triticum aestivum (Wheat)).